The chain runs to 705 residues: DNA polymerase alpha subunit B (705 aa).

A disordered region spans residues 115–199 (KKRKLHGPFS…TPTTSRQNVP (85 aa)). Residues 125–134 (LSDSKQTYNV) show a composition bias toward polar residues. A Phosphoserine modification is found at Ser126. Over residues 181–197 (STFQTPTTNTPTTSRQN) the composition is skewed to low complexity.

It belongs to the DNA polymerase alpha subunit B family. As to quaternary structure, DNA polymerase alpha:primase is a four subunit enzyme complex, which is assembled throughout the cell cycle, and consists of the two DNA polymerase subunits A POL1 and B POL12, and the DNA primase large PRI2 and small PRI1 subunits. Subunit B POL12 binds to subunit A POL1. In terms of processing, phosphorylated in a cell cycle-dependent manner.

It localises to the nucleus. Its function is as follows. Non-catalytic component of DNA polymerase alpha, which in a complex with DNA primase (DNA polymerase alpha:primase) constitutes a replicative polymerase. POL12 may play an essential role at the early stage of chromosomal DNA replication by coupling DNA polymerase alpha to the cellular replication machinery. Interacts with MCM10. The protein is DNA polymerase alpha subunit B (POL12) of Saccharomyces cerevisiae (strain ATCC 204508 / S288c) (Baker's yeast).